A 73-amino-acid polypeptide reads, in one-letter code: Sec-independent protein translocase protein TatA (73 aa).

Residues 1-21 (MGSFSIWHWLIVLVIVMLVFG) traverse the membrane as a helical segment. The segment at 50–73 (KEQIQQSSATAEKTVDVQAKDVNK) is disordered. Over residues 62–73 (KTVDVQAKDVNK) the composition is skewed to basic and acidic residues.

The protein belongs to the TatA/E family. The Tat system comprises two distinct complexes: a TatABC complex, containing multiple copies of TatA, TatB and TatC subunits, and a separate TatA complex, containing only TatA subunits. Substrates initially bind to the TatABC complex, which probably triggers association of the separate TatA complex to form the active translocon.

It localises to the cell inner membrane. Functionally, part of the twin-arginine translocation (Tat) system that transports large folded proteins containing a characteristic twin-arginine motif in their signal peptide across membranes. TatA could form the protein-conducting channel of the Tat system. The chain is Sec-independent protein translocase protein TatA from Polynucleobacter necessarius subsp. necessarius (strain STIR1).